The following is a 642-amino-acid chain: Threonine--tRNA ligase (642 aa).

In terms of domain architecture, TGS spans methionine 1 to aspartate 61. The segment at aspartate 243–proline 534 is catalytic. Residues cysteine 334, histidine 385, and histidine 511 each coordinate Zn(2+).

Belongs to the class-II aminoacyl-tRNA synthetase family. As to quaternary structure, homodimer. It depends on Zn(2+) as a cofactor.

It localises to the cytoplasm. It carries out the reaction tRNA(Thr) + L-threonine + ATP = L-threonyl-tRNA(Thr) + AMP + diphosphate + H(+). Catalyzes the attachment of threonine to tRNA(Thr) in a two-step reaction: L-threonine is first activated by ATP to form Thr-AMP and then transferred to the acceptor end of tRNA(Thr). Also edits incorrectly charged L-seryl-tRNA(Thr). In Buchnera aphidicola subsp. Acyrthosiphon pisum (strain Tuc7), this protein is Threonine--tRNA ligase.